We begin with the raw amino-acid sequence, 397 residues long: Phosphoglycerate kinase (397 aa).

Residues 21 to 23, Arg-36, 59 to 62, Arg-119, and Arg-156 contribute to the substrate site; these read DFN and HLGR. Residues Lys-207, Gly-295, Glu-326, and 353–356 contribute to the ATP site; that span reads GGDS.

This sequence belongs to the phosphoglycerate kinase family. In terms of assembly, monomer.

The protein localises to the cytoplasm. The enzyme catalyses (2R)-3-phosphoglycerate + ATP = (2R)-3-phospho-glyceroyl phosphate + ADP. Its pathway is carbohydrate degradation; glycolysis; pyruvate from D-glyceraldehyde 3-phosphate: step 2/5. The sequence is that of Phosphoglycerate kinase from Enterococcus faecalis (strain ATCC 700802 / V583).